We begin with the raw amino-acid sequence, 119 residues long: Large ribosomal subunit protein uL22 (119 aa).

The protein belongs to the universal ribosomal protein uL22 family. In terms of assembly, part of the 50S ribosomal subunit.

Its function is as follows. This protein binds specifically to 23S rRNA; its binding is stimulated by other ribosomal proteins, e.g. L4, L17, and L20. It is important during the early stages of 50S assembly. It makes multiple contacts with different domains of the 23S rRNA in the assembled 50S subunit and ribosome. The globular domain of the protein is located near the polypeptide exit tunnel on the outside of the subunit, while an extended beta-hairpin is found that lines the wall of the exit tunnel in the center of the 70S ribosome. The protein is Large ribosomal subunit protein uL22 of Rickettsia bellii (strain OSU 85-389).